Reading from the N-terminus, the 137-residue chain is Small heat shock protein IbpA (137 aa).

The sHSP domain maps to 28–137 (SQSNGGYPPY…ANKPRRIEIN (110 aa)).

This sequence belongs to the small heat shock protein (HSP20) family. As to quaternary structure, monomer. Forms homomultimers of about 100-150 subunits at optimal growth temperatures. Conformation changes to monomers at high temperatures or high ionic concentrations.

It is found in the cytoplasm. In terms of biological role, associates with aggregated proteins, together with IbpB, to stabilize and protect them from irreversible denaturation and extensive proteolysis during heat shock and oxidative stress. Aggregated proteins bound to the IbpAB complex are more efficiently refolded and reactivated by the ATP-dependent chaperone systems ClpB and DnaK/DnaJ/GrpE. Its activity is ATP-independent. This is Small heat shock protein IbpA from Citrobacter koseri (strain ATCC BAA-895 / CDC 4225-83 / SGSC4696).